The following is a 465-amino-acid chain: MITIETELINSTIDALKELISRPPLTEKLLSRPPFKYILDICKAVSAATGFPSPESCNYDDITDREERTAFLTSIIGQITDQLGVPVDVQIKSILAGKDVPKTLRMLVMLAQAAKLFKVRSNSSQPPPQQAPRETVASPPQEDLEALAREKAEKERQRREQEQQERERKERERQEKEREEREKHELESRERAEAEQWKQKQQQQQQQQQSAISPQKSPPKVRFADDDKTRVEEHQPVIERPHFNRPPPSQHSRRMAVTATSEPSAPQPSAMRLVKVVREESSDESNQDLNQNAGQDGGFTMGLDAEWCDEMLPGEFPLDTGAPAPSSTHGELVANILDTAEAYNVALHGDGSKKPTGLSTQRDKKPIDSYSQPVQKLISHISAIIRKSVPYAKHTAFLDEHILTMRTELHTASEAVTKLLSTSLKQESSLKQANNACESKLHSLKEQIYSLRQAQLELLHSTLAL.

2 disordered regions span residues 119 to 301 and 347 to 366; these read VRSN…GFTM and LHGD…DKKP. Residues 144–207 are a coiled coil; sequence LEALAREKAE…KQKQQQQQQQ (64 aa). Positions 146–198 are enriched in basic and acidic residues; that stretch reads ALAREKAEKERQRREQEQQERERKERERQEKEREEREKHELESRERAEAEQWK. Residues 199-220 are compositionally biased toward low complexity; that stretch reads QKQQQQQQQQQSAISPQKSPPK. Over residues 222-242 the composition is skewed to basic and acidic residues; the sequence is RFADDDKTRVEEHQPVIERPH.

Belongs to the TRAF3IP1 family.

Its subcellular location is the cell projection. The protein localises to the cilium. It localises to the flagellum. It is found in the cytoplasm. The protein resides in the cytoskeleton. Its subcellular location is the flagellum axoneme. The protein localises to the flagellum basal body. Functionally, component of the intraflagellar transport complex B (IFT-B) involved in flagellar assembly. The sequence is that of Intraflagellar transport protein 54 from Giardia intestinalis (strain ATCC 50803 / WB clone C6) (Giardia lamblia).